The following is a 31-amino-acid chain: Photosystem II reaction center protein T (31 aa).

The helical transmembrane segment at Ser-3–Phe-23 threads the bilayer.

This sequence belongs to the PsbT family. PSII is composed of 1 copy each of membrane proteins PsbA, PsbB, PsbC, PsbD, PsbE, PsbF, PsbH, PsbI, PsbJ, PsbK, PsbL, PsbM, PsbT, PsbX, PsbY, PsbZ, Psb30/Ycf12, peripheral proteins PsbO, CyanoQ (PsbQ), PsbU, PsbV and a large number of cofactors. It forms dimeric complexes.

The protein localises to the cellular thylakoid membrane. In terms of biological role, found at the monomer-monomer interface of the photosystem II (PS II) dimer, plays a role in assembly and dimerization of PSII. PSII is a light-driven water plastoquinone oxidoreductase, using light energy to abstract electrons from H(2)O, generating a proton gradient subsequently used for ATP formation. The sequence is that of Photosystem II reaction center protein T from Rippkaea orientalis (strain PCC 8801 / RF-1) (Cyanothece sp. (strain PCC 8801)).